The following is a 414-amino-acid chain: TBC domain-containing protein C1778.09 (414 aa).

The Rab-GAP TBC domain occupies 158–343; sequence GIPDCWRSIA…RIWDLLFLLG (186 aa).

It localises to the cytoplasm. The protein resides in the nucleus. The sequence is that of TBC domain-containing protein C1778.09 from Schizosaccharomyces pombe (strain 972 / ATCC 24843) (Fission yeast).